The primary structure comprises 190 residues: Ras-related protein RabF1 (190 aa).

Position 15 to 22 (G15 to T22) interacts with GTP. An Effector region motif is present at residues H37 to F44. Residues D62–E66 and N119–D122 each bind GTP. C187 is modified (cysteine methyl ester). C187 is lipidated: S-geranylgeranyl cysteine. Residues I188 to N190 constitute a propeptide, removed in mature form.

Belongs to the small GTPase superfamily. Rab family.

The protein localises to the cell membrane. This chain is Ras-related protein RabF1 (rabF1-1), found in Dictyostelium discoideum (Social amoeba).